The sequence spans 214 residues: tRNA (guanine-N(7)-)-methyltransferase (214 aa).

S-adenosyl-L-methionine-binding residues include Glu-43, Glu-68, Asp-95, and Asp-117. The active site involves Asp-117. Substrate-binding positions include Lys-121, Asp-153, and 190-193 (TEYE).

The protein belongs to the class I-like SAM-binding methyltransferase superfamily. TrmB family.

The enzyme catalyses guanosine(46) in tRNA + S-adenosyl-L-methionine = N(7)-methylguanosine(46) in tRNA + S-adenosyl-L-homocysteine. It functions in the pathway tRNA modification; N(7)-methylguanine-tRNA biosynthesis. Catalyzes the formation of N(7)-methylguanine at position 46 (m7G46) in tRNA. The polypeptide is tRNA (guanine-N(7)-)-methyltransferase (Staphylococcus aureus (strain COL)).